The primary structure comprises 210 residues: Large ribosomal subunit protein uL4 (210 aa).

The disordered stretch occupies residues 56–80; sequence FVSGGGKKPWRQKGTGRARAGSTRS.

Belongs to the universal ribosomal protein uL4 family. In terms of assembly, part of the 50S ribosomal subunit.

Its function is as follows. One of the primary rRNA binding proteins, this protein initially binds near the 5'-end of the 23S rRNA. It is important during the early stages of 50S assembly. It makes multiple contacts with different domains of the 23S rRNA in the assembled 50S subunit and ribosome. Forms part of the polypeptide exit tunnel. This is Large ribosomal subunit protein uL4 from Solidesulfovibrio magneticus (strain ATCC 700980 / DSM 13731 / RS-1) (Desulfovibrio magneticus).